The primary structure comprises 177 residues: Disulfide bond formation protein B (177 aa).

Residues 1-14 lie on the Cytoplasmic side of the membrane; it reads MLIFFKNLSMKRST. A helical membrane pass occupies residues 15–31; that stretch reads WILLFISALVLESTALY. At 32–49 the chain is on the periplasmic side; it reads FQHGMGLNPCVMCIYERV. Cysteine 41 and cysteine 44 form a disulfide bridge. The helical transmembrane segment at 50 to 65 threads the bilayer; that stretch reads AILGILFSGLIGCIAP. Over 66–72 the chain is Cytoplasmic; the sequence is KWLVLRI. A helical transmembrane segment spans residues 73–90; that stretch reads LALLIGLGSAVKGLLLAI. The Periplasmic portion of the chain corresponds to 91 to 145; that stretch reads KHLDYQINVYPWNQCAMVPDFPQTLPLDKWFPNIFMPSGSCSDITWSFLGFSMVQ. An intrachain disulfide couples cysteine 105 to cysteine 131. Residues 146–164 form a helical membrane-spanning segment; that stretch reads WIIVIFACYFLFFIILSIS. Topologically, residues 165 to 177 are cytoplasmic; it reads QFKKVRKNRMLFR.

It belongs to the DsbB family.

It localises to the cell inner membrane. Its function is as follows. Required for disulfide bond formation in some periplasmic proteins. Acts by oxidizing the DsbA protein. The polypeptide is Disulfide bond formation protein B (Histophilus somni (strain 129Pt) (Haemophilus somnus)).